Here is a 269-residue protein sequence, read N- to C-terminus: Glutamate racemase (269 aa).

Residues 11–12 and 43–44 each bind substrate; these read DS and YG. Cys-74 functions as the Proton donor/acceptor in the catalytic mechanism. Position 75–76 (75–76) interacts with substrate; the sequence is NT. The active-site Proton donor/acceptor is Cys-185. 186–187 is a substrate binding site; that stretch reads TH.

Belongs to the aspartate/glutamate racemases family.

It catalyses the reaction L-glutamate = D-glutamate. It participates in cell wall biogenesis; peptidoglycan biosynthesis. Its function is as follows. Provides the (R)-glutamate required for cell wall biosynthesis. The protein is Glutamate racemase of Bacillus cereus (strain ATCC 10987 / NRS 248).